Consider the following 700-residue polypeptide: DNA topoisomerase 1 (700 aa).

The Toprim domain occupies 3 to 114; the sequence is KNLIIVESPA…TLPRIVFHEI (112 aa). Mg(2+)-binding residues include glutamate 9 and aspartate 83. One can recognise a Topo IA-type catalytic domain in the interval 130–553; sequence NMHSVNAQQT…EFYYPFMRKI (424 aa). Residues 164-169 are interaction with DNA; it reads SAGRVQ. Tyrosine 298 (O-(5'-phospho-DNA)-tyrosine intermediate) is an active-site residue. 3 C4-type zinc fingers span residues 573–599, 629–656, and 669–692; these read CPDCGGELAIRKGRFGEFVACLNFPKC, CPSCQKGEIVERFSKRGKFYGCSAYPKC, and CEECGETLVIKELKKGTFLECLKC.

This sequence belongs to the type IA topoisomerase family. In terms of assembly, monomer. Requires Mg(2+) as cofactor.

The enzyme catalyses ATP-independent breakage of single-stranded DNA, followed by passage and rejoining.. Its function is as follows. Releases the supercoiling and torsional tension of DNA, which is introduced during the DNA replication and transcription, by transiently cleaving and rejoining one strand of the DNA duplex. Introduces a single-strand break via transesterification at a target site in duplex DNA. The scissile phosphodiester is attacked by the catalytic tyrosine of the enzyme, resulting in the formation of a DNA-(5'-phosphotyrosyl)-enzyme intermediate and the expulsion of a 3'-OH DNA strand. The free DNA strand then undergoes passage around the unbroken strand, thus removing DNA supercoils. Finally, in the religation step, the DNA 3'-OH attacks the covalent intermediate to expel the active-site tyrosine and restore the DNA phosphodiester backbone. The sequence is that of DNA topoisomerase 1 from Campylobacter jejuni subsp. jejuni serotype O:2 (strain ATCC 700819 / NCTC 11168).